The following is a 485-amino-acid chain: WAS/WASL-interacting protein family member 3 (485 aa).

Residues 1-41 (MPVPPPPPPPPPPPPPPPPPLGAPPPPPLGAPPPPPPPGPP) are compositionally biased toward pro residues. Residues 1–485 (MPVPPPPPPP…QLSLKALPVR (485 aa)) are disordered. 3 short sequence motifs (profilin-binding motif) span residues 3–8 (VPPPPP), 11–16 (PPPPPP), and 31–36 (APPPPP). In terms of domain architecture, WH2 spans 56–73 (GRSALLADIQQGTRLRKV). Arg-57 carries the asymmetric dimethylarginine modification. Residues 69 to 72 (RLRK) carry the RLRK motif. Residue Ser-161 is modified to Phosphoserine. Over residues 176-203 (PVPPRPSVPAPPPPTPPPPPPPPLPPAS) the composition is skewed to pro residues. Ser-211 carries the post-translational modification Phosphoserine. Residues 212-246 (PPAPPTKVNPSVVPPPLPCAPPLPPPPPTPPPLPP) show a composition bias toward pro residues. Residues 247-262 (ASALSDKAVRPQLAPL) are compositionally biased toward low complexity. 2 stretches are compositionally biased toward pro residues: residues 263–278 (HLPPIPPPLPLLPPCG) and 296–312 (PPAPPPPPPPPPPPPLP). At Ser-392 the chain carries Phosphoserine. The span at 392-405 (SPTTELSSKSQQPG) shows a compositional bias: polar residues. The segment covering 415-439 (AIDDFESKFTFHSMEDFPPPDEYKP) has biased composition (basic and acidic residues). The WASP-binding motif signature appears at 424–448 (TFHSMEDFPPPDEYKPCQKIYPSKV).

In terms of assembly, interacts with WASL, and monomeric and filamentous actin. In terms of tissue distribution, isoform 1 is expressed in brain and testis and isoform 2 is expressed only in brain (at protein level).

It is found in the cytoplasm. Functionally, may be a regulator of cytoskeletal organization (Potential). May have a role in spermatogenesis. The protein is WAS/WASL-interacting protein family member 3 (Wipf3) of Mus musculus (Mouse).